The chain runs to 303 residues: Protoheme IX farnesyltransferase (303 aa).

A run of 6 helical transmembrane segments spans residues 25–45, 54–74, 118–138, 166–186, 230–250, and 280–300; these read MGLV…AIVM, IPQI…ACAL, CLFL…VGYV, IGWV…FLVV, LVLL…FVVI, and FVYS…VSLI.

The protein belongs to the UbiA prenyltransferase family. Protoheme IX farnesyltransferase subfamily. Interacts with CtaA.

It localises to the cell membrane. It carries out the reaction heme b + (2E,6E)-farnesyl diphosphate + H2O = Fe(II)-heme o + diphosphate. Its pathway is porphyrin-containing compound metabolism; heme O biosynthesis; heme O from protoheme: step 1/1. Its function is as follows. Converts heme B (protoheme IX) to heme O by substitution of the vinyl group on carbon 2 of heme B porphyrin ring with a hydroxyethyl farnesyl side group. This is Protoheme IX farnesyltransferase from Staphylococcus epidermidis (strain ATCC 12228 / FDA PCI 1200).